Consider the following 508-residue polypeptide: Photosystem II CP47 reaction center protein (508 aa).

6 helical membrane-spanning segments follow: residues 21–36 (AVHIMHTALVAGWAGS), 101–115 (IVFSGLCFLAAIWHW), 140–156 (GIHLFLSGVACFGFGAF), 203–218 (IAAGTLGILAGLFHLS), 237–252 (VLSSSIAAVFFAAFVV), and 457–472 (SFALLFFFGHIWHGAR).

Belongs to the PsbB/PsbC family. PsbB subfamily. PSII is composed of 1 copy each of membrane proteins PsbA, PsbB, PsbC, PsbD, PsbE, PsbF, PsbH, PsbI, PsbJ, PsbK, PsbL, PsbM, PsbT, PsbX, PsbY, PsbZ, Psb30/Ycf12, at least 3 peripheral proteins of the oxygen-evolving complex and a large number of cofactors. It forms dimeric complexes. Interacts with PAM68. Interacts with HHL1. Binds multiple chlorophylls. PSII binds additional chlorophylls, carotenoids and specific lipids. serves as cofactor.

Its subcellular location is the plastid. It localises to the chloroplast thylakoid membrane. Functionally, one of the components of the core complex of photosystem II (PSII). It binds chlorophyll and helps catalyze the primary light-induced photochemical processes of PSII. PSII is a light-driven water:plastoquinone oxidoreductase, using light energy to abstract electrons from H(2)O, generating O(2) and a proton gradient subsequently used for ATP formation. This is Photosystem II CP47 reaction center protein from Arabidopsis thaliana (Mouse-ear cress).